Consider the following 301-residue polypeptide: MSKHGVEQLPAARALTWPQRLGQYWKLVRGDRPIGSLLLLWPTWWALWLAADGLPPLWTLLVFTAGVWLTRSAGCVINDYADRWLDPHVERTKSRPLATGAVSGREALWVFVVLMLVAFALVLTLNWLTVALSVPGVFLAASYPYLKRHTHLPQVYLGMAFGWGIPMAFAAVQGRVPLLGWLLYAANILWATAYDTWYAMVDRDDDIRMGSKSTAILFGRFDLIAQGILYALMAATLVLVGLRADLGVAYWAGLAVAALLVAYEFRIARHRERGPCFRAFLHNNWVGLAIFVGIAVAVAGR.

Transmembrane regions (helical) follow at residues 34–54 (IGSLLLLWPTWWALWLAADGL), 57–77 (LWTLLVFTAGVWLTRSAGCVI), 108–128 (LWVFVVLMLVAFALVLTLNWL), 152–172 (LPQVYLGMAFGWGIPMAFAAV), 176–196 (VPLLGWLLYAANILWATAYDT), 221–241 (FDLIAQGILYALMAATLVLVG), 245–265 (DLGVAYWAGLAVAALLVAYEF), and 279–299 (AFLHNNWVGLAIFVGIAVAVA).

The protein belongs to the UbiA prenyltransferase family. Mg(2+) serves as cofactor.

It is found in the cell inner membrane. The enzyme catalyses all-trans-octaprenyl diphosphate + 4-hydroxybenzoate = 4-hydroxy-3-(all-trans-octaprenyl)benzoate + diphosphate. It functions in the pathway cofactor biosynthesis; ubiquinone biosynthesis. In terms of biological role, catalyzes the prenylation of para-hydroxybenzoate (PHB) with an all-trans polyprenyl group. Mediates the second step in the final reaction sequence of ubiquinone-8 (UQ-8) biosynthesis, which is the condensation of the polyisoprenoid side chain with PHB, generating the first membrane-bound Q intermediate 3-octaprenyl-4-hydroxybenzoate. The polypeptide is 4-hydroxybenzoate octaprenyltransferase (Xanthomonas euvesicatoria pv. vesicatoria (strain 85-10) (Xanthomonas campestris pv. vesicatoria)).